The chain runs to 131 residues: Con-Ins Q1 (131 aa).

A signal peptide spans 1–24; sequence MTTSSYFLLVALGLLLYLCQSSFG. 4 disulfide bridges follow: Cys29–Cys107, Cys41–Cys110, Cys53–Cys123, and Cys109–Cys114. The propeptide at 59–92 is c peptide; it reads LQGGTDDARKKRGRASLLRKRRGFLSMLKARAKR. Residue Glu118 is modified to 4-carboxyglutamate; partial. Position 130 is a serine amide (Ser130).

This sequence belongs to the insulin family. In terms of assembly, heterodimer of A and B chains; disulfide-linked. In terms of tissue distribution, expressed by the venom gland.

It is found in the secreted. Functionally, this venom insulin facilitates prey capture by rapidly inducing hypoglycemic shock. Intraperitoneal injection of this peptide into zebrafish lowers blood glucose with the same potency than human insulin. In vivo, when applied to water, this peptide reduces overall locomotor activity of zebrafish larvae, observed as a significant decrease in the percentage of time spent swimming and movement frequency. In Conus quercinus (Oak cone), this protein is Con-Ins Q1.